A 296-amino-acid polypeptide reads, in one-letter code: Probable ribosomal RNA small subunit methyltransferase A (296 aa).

The span at 1–16 (MTDATSGSDPDSTTPV) shows a compositional bias: polar residues. The interval 1–25 (MTDATSGSDPDSTTPVDLTGEDFRD) is disordered. Positions 44, 46, 72, 93, 121, and 136 each coordinate S-adenosyl-L-methionine.

Belongs to the class I-like SAM-binding methyltransferase superfamily. rRNA adenine N(6)-methyltransferase family. RsmA subfamily.

It is found in the cytoplasm. Its function is as follows. Specifically dimethylates two adjacent adenosines in the loop of a conserved hairpin near the 3'-end of 16S rRNA in the 30S particle. May play a critical role in biogenesis of 30S subunits. This is Probable ribosomal RNA small subunit methyltransferase A from Haloquadratum walsbyi (strain DSM 16790 / HBSQ001).